We begin with the raw amino-acid sequence, 175 residues long: Lactobacillus up-regulated protein (175 aa).

An N-terminal signal peptide occupies residues 1–18 (MRSIFLAVLGLMATSSLA). Residue asparagine 59 is glycosylated (N-linked (GlcNAc...) asparagine).

This Emericella nidulans (strain FGSC A4 / ATCC 38163 / CBS 112.46 / NRRL 194 / M139) (Aspergillus nidulans) protein is Lactobacillus up-regulated protein (lbuA).